The chain runs to 501 residues: ATP synthase subunit alpha, chloroplastic (501 aa).

Residue 170–177 (GDRQTGKT) participates in ATP binding.

Belongs to the ATPase alpha/beta chains family. In terms of assembly, F-type ATPases have 2 components, CF(1) - the catalytic core - and CF(0) - the membrane proton channel. CF(1) has five subunits: alpha(3), beta(3), gamma(1), delta(1), epsilon(1). CF(0) has four main subunits: a, b, b' and c.

Its subcellular location is the plastid. The protein resides in the chloroplast thylakoid membrane. The catalysed reaction is ATP + H2O + 4 H(+)(in) = ADP + phosphate + 5 H(+)(out). Functionally, produces ATP from ADP in the presence of a proton gradient across the membrane. The alpha chain is a regulatory subunit. This Nephroselmis olivacea (Green alga) protein is ATP synthase subunit alpha, chloroplastic.